Reading from the N-terminus, the 834-residue chain is MAVEEEGLRVFQSVRIKIGEAKNLPSYPGPNKMRDCYCTVNLDQEEVFRTKIVEKSLCPFYGEDFYCEIPRSFRHLSFYIFDRDVFRRDSIIGKVAIQKEDLQRYHNRDTWFQLQHVDADSEVQGKVHLELRLSEVITDTGVVCHKLAARIFECQGLPIVNGQCDPYATVTLAGPFRSEAKKTKVKKKTNNPQFDEVFYFEVTRPCSYSKKSHFDFEEEDVDKLEIRVDLWNASNLKFGDEFLGELRIPLHVLRYASSYEAWYFLQPRDNGSKSVKPDDLGSLRLNVVYTEDHVFSSEYYSPLRDLLLKSADVEPVSASAAHILGEVCRDKQEAAIPLVRLLLHYGRVVPFISAIASAEVKRTQDPNTIFRGNSLTSKCIDETMKLAGMHYLHVTLKPTIEEICQSHKSCEIDPVKLKDGENLENNMESLRQYVDRIFSVITKSGVSCPTVMCDIFFSLREAAAKRFQDDLDVRYTAVSSFIFLRFFAPAILSPNLFQLTPHHTDPQTSRTLTLISKTIQTLGSLSKSKSASFKESYMATFYEFFNEQKYADAVKNFLDLISSSGRRDPKSIEQPILLKEGFMIKRAQGRKRFGMKNFKKRWFRLTNHEFTYQKSKGDQPLCNIPIENILAVERLEEESFRMKNMFQVIQPERALYIQANNCVEAKDWIDILTKVSQCNQKRLTVFHPSAYLNGHWLCCRASSDTAIGCTPCTGGLPANIQLDIDGDRETERIYSLFNLYMGKLEKMQEACGSKSVYDGPEQEEYSTFIIDDPQETYRTLKQVIAGVGTLEQEHAQYRRNKFKKTRYGSQEHPIGDKSFQNYIRQQSEISTHSI.

2 consecutive C2 domains span residues 1–112 (MAVE…DTWF) and 123–263 (VQGK…EAWY). Ala2 is subject to N-acetylalanine. At Tyr66 the chain carries Phosphotyrosine. Ser77 is modified (phosphoserine). Phosphothreonine is present on Thr110. One can recognise a Ras-GAP domain in the interval 346–561 (GRVVPFISAI…DAVKNFLDLI (216 aa)). The 102-residue stretch at 576–677 (ILLKEGFMIK…WIDILTKVSQ (102 aa)) folds into the PH domain. Residues 679-715 (NQKRLTVFHPSAYLNGHWLCCRASSDTAIGCTPCTGG) form a Btk-type zinc finger. Positions 687, 698, 699, and 709 each coordinate Zn(2+). Residues Ser809 and Ser833 each carry the phosphoserine modification.

Functionally, inhibitory regulator of the Ras-cyclic AMP pathway. Binds inositol tetrakisphosphate (IP4). This Rattus norvegicus (Rat) protein is Ras GTPase-activating protein 3 (Rasa3).